The following is a 543-amino-acid chain: Plant intracellular Ras-group-related LRR protein 5 (543 aa).

LRR repeat units follow at residues 239–262 (LQDV…IGSL), 264–284 (YLTK…AFGE), 285–307 (LSNL…SFGN), 309–331 (TSLA…LGKL), 332–354 (ANLR…IGSC), 356–377 (SLVE…IGKL), 378–400 (EKLE…VGSL), 402–424 (RLRE…CFAT), 426–448 (LVKL…IGNL), and 449–470 (EMLE…SFRC). The stretch at 472 to 494 (SRLRVFHADETPLEFPPREVVKL) is one LRR 11; degenerate repeat. Positions 495 to 502 (GAQAVVKY) match the GVYW; degenerate motif.

It belongs to the SHOC2 family. As to expression, widely expressed.

Functionally, leucine-rich repeat protein that likely mediates protein interactions, possibly in the context of signal transduction. This is Plant intracellular Ras-group-related LRR protein 5 (IRL5) from Oryza sativa subsp. japonica (Rice).